We begin with the raw amino-acid sequence, 333 residues long: Ketol-acid reductoisomerase (NADP(+)) (333 aa).

One can recognise a KARI N-terminal Rossmann domain in the interval 1–171 (MSNDTQPKIA…GGARANIIKT (171 aa)). Residues 14-17 (YGSQ), R37, T42, and 72-75 (DMVQ) each bind NADP(+). Residue H97 is part of the active site. Residue G123 coordinates NADP(+). Positions 172 to 317 (TFKEETETDL…KKLRAKMVWL (146 aa)) constitute a KARI C-terminal knotted domain. Residues D180, E184, E216, and E220 each contribute to the Mg(2+) site. S241 contacts substrate.

Belongs to the ketol-acid reductoisomerase family. Requires Mg(2+) as cofactor.

The catalysed reaction is (2R)-2,3-dihydroxy-3-methylbutanoate + NADP(+) = (2S)-2-acetolactate + NADPH + H(+). The enzyme catalyses (2R,3R)-2,3-dihydroxy-3-methylpentanoate + NADP(+) = (S)-2-ethyl-2-hydroxy-3-oxobutanoate + NADPH + H(+). It participates in amino-acid biosynthesis; L-isoleucine biosynthesis; L-isoleucine from 2-oxobutanoate: step 2/4. Its pathway is amino-acid biosynthesis; L-valine biosynthesis; L-valine from pyruvate: step 2/4. Functionally, involved in the biosynthesis of branched-chain amino acids (BCAA). Catalyzes an alkyl-migration followed by a ketol-acid reduction of (S)-2-acetolactate (S2AL) to yield (R)-2,3-dihydroxy-isovalerate. In the isomerase reaction, S2AL is rearranged via a Mg-dependent methyl migration to produce 3-hydroxy-3-methyl-2-ketobutyrate (HMKB). In the reductase reaction, this 2-ketoacid undergoes a metal-dependent reduction by NADPH to yield (R)-2,3-dihydroxy-isovalerate. This is Ketol-acid reductoisomerase (NADP(+)) from Xanthomonas oryzae pv. oryzae (strain MAFF 311018).